Consider the following 512-residue polypeptide: Delta(14)-sterol reductase (512 aa).

The next 8 membrane-spanning stretches (helical) occupy residues 27–47 (IGAS…GFLC), 100–120 (AVLG…LLPA), 140–160 (ACLS…VRGP), 172–192 (YIQL…YVYL), 242–262 (SFME…AFAA), 278–298 (WTPL…VIIS), 324–344 (FGFM…SIQA), and 353–373 (ALGP…YYIF). NADP(+)-binding positions include Lys-380, Arg-384, Leu-407, Trp-412, and 419–420 (NY). 2 helical membrane passes run 418-438 (INYL…LAAG) and 458-478 (MKGA…ILLI). Residues Asp-484, 488 to 492 (CRRKY), and Tyr-499 contribute to the NADP(+) site.

Belongs to the ERG4/ERG24 family.

The protein resides in the membrane. It catalyses the reaction 4,4-dimethyl-5alpha-cholesta-8,24-dien-3beta-ol + NADP(+) = 4,4-dimethyl-5alpha-cholesta-8,14,24-trien-3beta-ol + NADPH + H(+). Its pathway is steroid biosynthesis; zymosterol biosynthesis; zymosterol from lanosterol: step 2/6. Functionally, reduces the C14=C15 double bond of 4,4-dimethyl-cholesta-8,14,24-trienol to produce 4,4-dimethyl-cholesta-8,24-dienol. The polypeptide is Delta(14)-sterol reductase (ERG3) (Septoria lycopersici (Tomato leaf spot fungus)).